A 162-amino-acid chain; its full sequence is MRHLVLIGFMGSGKSSLAQELGLALKLEVLDTDMIISERVGLSVRGIFEELGEDNFRMFEKNLIDELKTLKTPHIISTGGGIVMHDNLKGLGTTFYLKMDFETLIKRLNQKEREKRPLLNDLTQAKELFEKRQVLYEKNASFIIDARGGLNNSLKQVLQFIA.

An ATP-binding site is contributed by glycine 11–serine 16. Position 15 (serine 15) interacts with Mg(2+). Residues aspartate 33, arginine 57, and glycine 80 each contribute to the substrate site. Arginine 116 contributes to the ATP binding site. Arginine 132 serves as a coordination point for substrate.

It belongs to the shikimate kinase family. Monomer. Mg(2+) is required as a cofactor.

It localises to the cytoplasm. It catalyses the reaction shikimate + ATP = 3-phosphoshikimate + ADP + H(+). The protein operates within metabolic intermediate biosynthesis; chorismate biosynthesis; chorismate from D-erythrose 4-phosphate and phosphoenolpyruvate: step 5/7. Functionally, catalyzes the specific phosphorylation of the 3-hydroxyl group of shikimic acid using ATP as a cosubstrate. In Helicobacter pylori (strain Shi470), this protein is Shikimate kinase.